A 328-amino-acid polypeptide reads, in one-letter code: ABC transporter I family member 20 (328 aa).

The ABC transporter domain occupies Val14–Glu257. Gly55–Thr62 serves as a coordination point for ATP. The tract at residues Glu263 to Pro295 is disordered. Positions Phe282–Val291 are enriched in basic and acidic residues.

This sequence belongs to the ABC transporter superfamily. ABCI family.

It localises to the cytoplasm. The polypeptide is ABC transporter I family member 20 (ABCI20) (Arabidopsis thaliana (Mouse-ear cress)).